A 187-amino-acid chain; its full sequence is Adenine phosphoribosyltransferase 1 (187 aa).

Ser-68 is modified (phosphoserine). Residue 133–137 coordinates AMP; sequence ATGGS.

The protein belongs to the purine/pyrimidine phosphoribosyltransferase family. Homodimer. Mg(2+) serves as cofactor.

It localises to the cytoplasm. Its subcellular location is the nucleus. It carries out the reaction AMP + diphosphate = 5-phospho-alpha-D-ribose 1-diphosphate + adenine. It functions in the pathway purine metabolism; AMP biosynthesis via salvage pathway; AMP from adenine: step 1/1. Functionally, catalyzes a salvage reaction resulting in the formation of AMP, that is energically less costly than de novo synthesis. The sequence is that of Adenine phosphoribosyltransferase 1 from Saccharomyces cerevisiae (strain ATCC 204508 / S288c) (Baker's yeast).